The following is a 364-amino-acid chain: Endopolygalacturonase B (364 aa).

Positions 1–20 (MHFLQNSLIAAAMGAALVAA) are cleaved as a signal peptide. A propeptide spanning residues 21-29 (APAADLDAR) is cleaved from the precursor. Cys32 and Cys47 are disulfide-bonded. The N-linked (GlcNAc...) asparagine glycan is linked to Asn138. PbH1 repeat units follow at residues 159–188 (SDHL…DIGS), 189–210 (STYI…AINS), 211–231 (GEHI…SIGS), 240–261 (VKSV…RIKT), 269–291 (VTDV…IVEQ), and 303–348 (TNGV…DITG). Asp203 functions as the Proton donor in the catalytic mechanism. Cys205 and Cys221 are joined by a disulfide. His225 is an active-site residue. Intrachain disulfides connect Cys331/Cys336 and Cys355/Cys364.

The protein belongs to the glycosyl hydrolase 28 family.

It is found in the secreted. It catalyses the reaction (1,4-alpha-D-galacturonosyl)n+m + H2O = (1,4-alpha-D-galacturonosyl)n + (1,4-alpha-D-galacturonosyl)m.. In terms of biological role, involved in maceration and soft-rotting of plant tissue. Hydrolyzes the 1,4-alpha glycosidic bonds of de-esterified pectate in the smooth region of the plant cell wall. The polypeptide is Endopolygalacturonase B (pgaB) (Emericella nidulans (strain FGSC A4 / ATCC 38163 / CBS 112.46 / NRRL 194 / M139) (Aspergillus nidulans)).